The following is a 129-amino-acid chain: Phosphoribosyl-AMP cyclohydrolase (129 aa).

Position 76 (Asp76) interacts with Mg(2+). Cys77 contacts Zn(2+). Mg(2+)-binding residues include Asp78 and Asp80. Residues Cys97 and Cys104 each contribute to the Zn(2+) site.

It belongs to the PRA-CH family. Homodimer. Mg(2+) serves as cofactor. Requires Zn(2+) as cofactor.

The protein resides in the cytoplasm. It catalyses the reaction 1-(5-phospho-beta-D-ribosyl)-5'-AMP + H2O = 1-(5-phospho-beta-D-ribosyl)-5-[(5-phospho-beta-D-ribosylamino)methylideneamino]imidazole-4-carboxamide. Its pathway is amino-acid biosynthesis; L-histidine biosynthesis; L-histidine from 5-phospho-alpha-D-ribose 1-diphosphate: step 3/9. Its function is as follows. Catalyzes the hydrolysis of the adenine ring of phosphoribosyl-AMP. The chain is Phosphoribosyl-AMP cyclohydrolase from Verminephrobacter eiseniae (strain EF01-2).